We begin with the raw amino-acid sequence, 202 residues long: Glycerol-3-phosphate acyltransferase (202 aa).

Helical transmembrane passes span 11–31 (VLIA…GLIL), 87–107 (PALA…WLGF), 116–136 (FIGV…AIWL), and 158–178 (LILW…LAAL).

The protein belongs to the PlsY family. Probably interacts with PlsX.

It is found in the cell inner membrane. The catalysed reaction is an acyl phosphate + sn-glycerol 3-phosphate = a 1-acyl-sn-glycero-3-phosphate + phosphate. It functions in the pathway lipid metabolism; phospholipid metabolism. Functionally, catalyzes the transfer of an acyl group from acyl-phosphate (acyl-PO(4)) to glycerol-3-phosphate (G3P) to form lysophosphatidic acid (LPA). This enzyme utilizes acyl-phosphate as fatty acyl donor, but not acyl-CoA or acyl-ACP. The chain is Glycerol-3-phosphate acyltransferase from Methylorubrum extorquens (strain PA1) (Methylobacterium extorquens).